Reading from the N-terminus, the 105-residue chain is Large ribosomal subunit protein eL36 (105 aa).

The protein belongs to the eukaryotic ribosomal protein eL36 family. As to quaternary structure, component of the large ribosomal subunit.

It localises to the cytoplasm. The protein localises to the cytosol. Component of the large ribosomal subunit. The ribosome is a large ribonucleoprotein complex responsible for the synthesis of proteins in the cell. The sequence is that of Large ribosomal subunit protein eL36 (RPL36) from Hydrophis hardwickii (Hardwick's spine-bellied seasnake).